The sequence spans 285 residues: Bifunctional protein FolD (285 aa).

NADP(+)-binding positions include 166–168 (GAS) and Ile232.

Belongs to the tetrahydrofolate dehydrogenase/cyclohydrolase family. As to quaternary structure, homodimer.

It catalyses the reaction (6R)-5,10-methylene-5,6,7,8-tetrahydrofolate + NADP(+) = (6R)-5,10-methenyltetrahydrofolate + NADPH. It carries out the reaction (6R)-5,10-methenyltetrahydrofolate + H2O = (6R)-10-formyltetrahydrofolate + H(+). The protein operates within one-carbon metabolism; tetrahydrofolate interconversion. In terms of biological role, catalyzes the oxidation of 5,10-methylenetetrahydrofolate to 5,10-methenyltetrahydrofolate and then the hydrolysis of 5,10-methenyltetrahydrofolate to 10-formyltetrahydrofolate. This chain is Bifunctional protein FolD, found in Psychromonas ingrahamii (strain DSM 17664 / CCUG 51855 / 37).